Consider the following 1247-residue polypeptide: Catenin delta-2 (1247 aa).

Disordered stretches follow at residues 1–50, 134–238, and 256–309; these read MFAR…TTSA, SGIL…SAFH, and LPAP…KSYS. Serine 7 is subject to Phosphoserine. Residues 22–50 are compositionally biased toward polar residues; it reads PSASEKNSSLSPGLNTSNGDGSETETTSA. Positions 49 to 84 form a coiled coil; sequence SAILASVKEQELQFERLTRELEAERQIVASQLERCK. Residues 149–160 show a composition bias toward low complexity; that stretch reads SLLSQSALQLNS. Residues 172–207 show a composition bias toward polar residues; sequence YHSNQTLALGDTAPSQLPARSTQARAAGQSFSQGTT. Arginine 209 bears the Omega-N-methylarginine mark. Residues 218-228 are compositionally biased toward pro residues; it reads PAPPPPPPREP. Omega-N-methylarginine is present on arginine 261. Phosphoserine is present on residues serine 264 and serine 273. The span at 265-276 shows a compositional bias: polar residues; the sequence is PLTTTQGGSPTK. Omega-N-methylarginine occurs at positions 279 and 293. Residues 296–309 are compositionally biased toward polar residues; that stretch reads SPKQSPSRLAKSYS. 4 positions are modified to phosphoserine: serine 324, serine 357, serine 412, and serine 458. An ARM 1 repeat occupies 391–433; that stretch reads GSRASYSSQHGHLAPELRALQSPEHHIDPIYEDRVYQKPPMRS. The tract at residues 429–480 is disordered; sequence PPMRSLSQSQGDPLPPAHTGTFRTSTAPSSPGVDSVPLQRTGSQHGPQNAAA. Polar residues predominate over residues 466–475; sequence LQRTGSQHGP. Serine 511 is subject to Phosphoserine. A Phosphotyrosine modification is found at tyrosine 513. Residues 514–533 form a disordered region; the sequence is SKSGPALPPEGTLARSPSID. ARM repeat units follow at residues 537 to 576, 579 to 618, 623 to 663, 679 to 721, 725 to 770, 832 to 872, 904 to 943, and 997 to 1040; these read KDPR…HLCF, NKIK…NLVY, DDNK…NLSS, LTNA…NVSS, EARR…NLSY, PKGI…NLAA, VYIR…NMAL, and MENA…SMWQ. Disordered regions lie at residues 1064-1131 and 1152-1176; these read TIER…HTSR and APAE…RKDY. Residues 1072-1081 are compositionally biased toward polar residues; sequence PYSSSRTPSI. Serine 1087 and serine 1098 each carry phosphoserine. Low complexity predominate over residues 1087–1100; the sequence is SPNNRSASAPASPR. Over residues 1103-1112 the composition is skewed to basic and acidic residues; that stretch reads ISLKERKTDY.

This sequence belongs to the beta-catenin family. Binds to E-cadherin at a juxtamembrane site within the cytoplasmic domain. Binds to PSEN1. Interacts with PDZD2. Interacts (via the extreme C-terminus) with FRMPD2 (via the PDZ 2 domain). Interacts with ZBTB33. Interacts with ARHGEF28. Interacts with CDK5. Interacts with CTNNB1. Interacts with GSK3A and GSK3B. Interacts with DNM2. Interacts with CCDC85B. O-glycosylated. In terms of processing, phosphorylated by CDK5. Phosphorylated by GSK3B. In terms of tissue distribution, expressed in neurons and glial cells. Isoform 2 was found to be the most predominant isoform in various brain regions. Expressed at neuromuscular junctions.

It localises to the nucleus. The protein localises to the cell junction. It is found in the adherens junction. Its subcellular location is the cell projection. The protein resides in the dendrite. It localises to the perikaryon. In terms of biological role, has a critical role in neuronal development, particularly in the formation and/or maintenance of dendritic spines and synapses. Involved in the regulation of canonical Wnt signaling. It probably acts on beta-catenin turnover, facilitating beta-catenin interaction with GSK3B, phosphorylation, ubiquitination and degradation. May be involved in neuronal cell adhesion and tissue morphogenesis and integrity by regulating adhesion molecules. Functions as a transcriptional activator when bound to ZBTB33. The protein is Catenin delta-2 (Ctnnd2) of Mus musculus (Mouse).